The sequence spans 771 residues: Rho GTPase-activating protein 26 (771 aa).

One can recognise a BAR domain in the interval 7-262 (EFSDCYLDSP…MKENPHEHLA (256 aa)). Residues 265–369 (PFTMEGYLYV…WMEAMDGREP (105 aa)) form the PH domain. In terms of domain architecture, Rho-GAP spans 383-568 (AQLDNIGFSI…IIIENYEEMF (186 aa)). Positions 575 to 712 (PQTNSQLHLS…SSTSSDSSPV (138 aa)) are disordered. Residues 608–617 (HSSEKEEKRN) are compositionally biased toward basic and acidic residues. Residues 618 to 637 (SVNSSAESVSSSNANSSVNS) show a composition bias toward low complexity. Composition is skewed to polar residues over residues 638 to 650 (TCTQ…NLNA) and 662 to 671 (RPNSLLNPKN). 2 stretches are compositionally biased toward low complexity: residues 673–683 (SGLLPSSLNPS) and 691–712 (PMVS…SSPV). In terms of domain architecture, SH3 spans 713–771 (SVPRKAKALYACKAEHDSELSFSAGTVFENVCPSQEPGWLEGTLNGKTGLIPENYVEFL).

Its subcellular location is the cell junction. The protein localises to the focal adhesion. It localises to the cytoplasm. The protein resides in the cytoskeleton. It is found in the endosome membrane. Its function is as follows. GTPase-activating protein for rhoa and cdc42. May be involved in the regulation of neosynthesized protein export through a Rab-endososomal dependent export route. In Xenopus laevis (African clawed frog), this protein is Rho GTPase-activating protein 26 (arhgap26).